The sequence spans 395 residues: Non-homologous end joining protein Ku (395 aa).

In terms of domain architecture, Ku spans 9-181 (ISFGLVSIPI…PPEDAAPDGD (173 aa)). Residues 252–395 (RAARTSRDDE…SASSRKRTSA (144 aa)) are disordered. Composition is skewed to polar residues over residues 283 to 292 (SSKTSGQSSG) and 311 to 320 (GKTVTRSGDS). Basic residues predominate over residues 351–361 (TARKTTAKKTT). Positions 362-371 (AKGTTGTTAA) are enriched in low complexity.

The protein belongs to the prokaryotic Ku family. In terms of assembly, homodimer. Interacts with LigD.

In terms of biological role, with LigD forms a non-homologous end joining (NHEJ) DNA repair enzyme, which repairs dsDNA breaks with reduced fidelity. Binds linear dsDNA with 5'- and 3'- overhangs but not closed circular dsDNA nor ssDNA. Recruits and stimulates the ligase activity of LigD. The protein is Non-homologous end joining protein Ku of Streptomyces griseus subsp. griseus (strain JCM 4626 / CBS 651.72 / NBRC 13350 / KCC S-0626 / ISP 5235).